A 199-amino-acid chain; its full sequence is Cytochrome c oxidase assembly protein CtaG (199 aa).

Residues M1–R12 lie on the Cytoplasmic side of the membrane. The helical; Signal-anchor for type II membrane protein transmembrane segment at A13 to A35 threads the bilayer. Topologically, residues V36 to L199 are periplasmic.

The protein belongs to the COX11/CtaG family.

It localises to the cell inner membrane. Its function is as follows. Exerts its effect at some terminal stage of cytochrome c oxidase synthesis, probably by being involved in the insertion of the copper B into subunit I. The chain is Cytochrome c oxidase assembly protein CtaG from Sinorhizobium fredii (strain NBRC 101917 / NGR234).